Consider the following 141-residue polypeptide: MSFIQEFKEFAMRGNVIDLAVGVIIGGAFGKIVDSLVKDVVMPIVGRLVGGVDFRHLYVNLGSQQYETLEAAEKAGAPLVKYGAFINTTIDFLIIALAIFVAIKAINKLKRSEPPAPAPEPAPEPEDIKLLREIRDALKQR.

The next 2 helical transmembrane spans lie at 16-36 (VIDLAVGVIIGGAFGKIVDSL) and 83-103 (GAFINTTIDFLIIALAIFVAI).

This sequence belongs to the MscL family. As to quaternary structure, homopentamer.

Its subcellular location is the cell inner membrane. Channel that opens in response to stretch forces in the membrane lipid bilayer. May participate in the regulation of osmotic pressure changes within the cell. This is Large-conductance mechanosensitive channel from Azoarcus sp. (strain BH72).